Reading from the N-terminus, the 815-residue chain is Probable inorganic carbon transporter subunit DabA (815 aa).

Residues cysteine 334, aspartate 336, histidine 507, and cysteine 522 each contribute to the Zn(2+) site.

It belongs to the inorganic carbon transporter (TC 9.A.2) DabA family. In terms of assembly, forms a complex with DabB. Zn(2+) is required as a cofactor.

It is found in the cell inner membrane. Part of an energy-coupled inorganic carbon pump. This Ectopseudomonas mendocina (strain ymp) (Pseudomonas mendocina) protein is Probable inorganic carbon transporter subunit DabA.